The chain runs to 1160 residues: Protein GIGANTEA (1160 aa).

A compositionally biased stretch (polar residues) spans 158–169; it reads CSSTSDQASSCE. Disordered stretches follow at residues 158–188, 600–629, and 800–830; these read CSST…RKPL, GGSK…RNRC, and PVKK…SRSH. A compositionally biased stretch (basic and acidic residues) spans 170-187; sequence SMEKRANGSPRNEPDRKP. Over residues 801 to 812 the composition is skewed to basic and acidic residues; sequence VKKDEPPIEEKN.

It belongs to the GIGANTEA family.

It is found in the nucleus. In terms of biological role, involved in regulation of circadian rhythm, and in the control of the photoperiodic flowering. Acts as a suppressor of flowering under short-day (SD) and long-day (LD) conditions. Activates Hd1/CONSTANS gene. The polypeptide is Protein GIGANTEA (GI) (Oryza sativa subsp. japonica (Rice)).